Here is a 379-residue protein sequence, read N- to C-terminus: Dihydroflavonol 4-reductase (379 aa).

NADP(+) is bound by residues Lys56 and Tyr175.

It belongs to the NAD(P)-dependent epimerase/dehydratase family. Dihydroflavonol-4-reductase subfamily. Expressed in both leaf and hypocotyl tissues.

It carries out the reaction a (2R,3S,4S)-leucoanthocyanidin + NADP(+) = a (2R,3R)-dihydroflavonol + NADPH + H(+). It catalyses the reaction (2S)-flavan-4-ol + NADP(+) = (2S)-flavanone + NADPH + H(+). It functions in the pathway pigment biosynthesis; anthocyanin biosynthesis. Its function is as follows. Bifunctional enzyme involved in flavonoid metabolism. This chain is Dihydroflavonol 4-reductase, found in Solanum lycopersicum (Tomato).